A 515-amino-acid polypeptide reads, in one-letter code: Probable cytosol aminopeptidase (515 aa).

Mn(2+)-binding residues include Lys-274 and Asp-279. The active site involves Lys-286. Mn(2+) is bound by residues Asp-297, Asp-356, and Glu-358. Arg-360 is an active-site residue.

Belongs to the peptidase M17 family. Requires Mn(2+) as cofactor.

It localises to the cytoplasm. The enzyme catalyses Release of an N-terminal amino acid, Xaa-|-Yaa-, in which Xaa is preferably Leu, but may be other amino acids including Pro although not Arg or Lys, and Yaa may be Pro. Amino acid amides and methyl esters are also readily hydrolyzed, but rates on arylamides are exceedingly low.. The catalysed reaction is Release of an N-terminal amino acid, preferentially leucine, but not glutamic or aspartic acids.. Its function is as follows. Presumably involved in the processing and regular turnover of intracellular proteins. Catalyzes the removal of unsubstituted N-terminal amino acids from various peptides. This Desulforapulum autotrophicum (strain ATCC 43914 / DSM 3382 / VKM B-1955 / HRM2) (Desulfobacterium autotrophicum) protein is Probable cytosol aminopeptidase.